Here is a 581-residue protein sequence, read N- to C-terminus: Transcription factor GTE2 (581 aa).

The interval 130 to 153 (VKKTKTKKKKIGHGQKRSNPFATD) is disordered. Positions 131–145 (KKTKTKKKKIGHGQK) are enriched in basic residues. The 107-residue stretch at 169–275 (KVLKSMMTTC…SQFDVWFNPT (107 aa)) folds into the Bromo domain. Disordered regions lie at residues 329 to 399 (PLLP…KREM) and 470 to 581 (KRQG…KEAP). The span at 346–365 (PSPPPSPVQPPPPPSPPPQP) shows a compositional bias: pro residues. In terms of domain architecture, NET spans 389-470 (PKAKDPNKRE…NYRKMASKIK (82 aa)). Composition is skewed to basic and acidic residues over residues 390 to 399 (KAKDPNKREM) and 493 to 503 (SAEKRGRKGGE). Over residues 504 to 517 (AGEEDVDIGEDIPV) the composition is skewed to acidic residues. Residues 530-564 (TAAAASGGSSSSGSFSSSGSSSSSDSESGSSSGSD) are compositionally biased toward low complexity.

The protein resides in the nucleus. The chain is Transcription factor GTE2 (GTE2) from Arabidopsis thaliana (Mouse-ear cress).